A 390-amino-acid chain; its full sequence is S-adenosylmethionine synthase 2 (390 aa).

Mg(2+) is bound at residue Glu9. An ATP-binding site is contributed by His15. Glu43 is a binding site for K(+). Positions 56 and 99 each coordinate L-methionine. Residues 167–169 (DGK), 235–238 (SGRF), Asp246, 252–253 (RK), Ala269, Lys273, and Lys277 contribute to the ATP site. Asp246 is an L-methionine binding site. Lys277 contacts L-methionine.

This sequence belongs to the AdoMet synthase family. In terms of assembly, homotetramer. The cofactor is Mn(2+). Mg(2+) serves as cofactor. Co(2+) is required as a cofactor. It depends on K(+) as a cofactor.

The protein resides in the cytoplasm. The enzyme catalyses L-methionine + ATP + H2O = S-adenosyl-L-methionine + phosphate + diphosphate. It participates in amino-acid biosynthesis; S-adenosyl-L-methionine biosynthesis; S-adenosyl-L-methionine from L-methionine: step 1/1. Its function is as follows. Catalyzes the formation of S-adenosylmethionine from methionine and ATP. The reaction comprises two steps that are both catalyzed by the same enzyme: formation of S-adenosylmethionine (AdoMet) and triphosphate, and subsequent hydrolysis of the triphosphate. The protein is S-adenosylmethionine synthase 2 (SAM2) of Petunia hybrida (Petunia).